The sequence spans 420 residues: Adenylosuccinate synthetase (420 aa).

GTP contacts are provided by residues 12-18 and 40-42; these read GDEGKGK and GHT. Catalysis depends on D13, which acts as the Proton acceptor. Residues D13 and G40 each coordinate Mg(2+). IMP-binding positions include 13 to 16, 38 to 41, T128, R142, Q221, T236, and R299; these read DEGK and NAGH. Residue H41 is the Proton donor of the active site. 295-301 lines the substrate pocket; the sequence is ATTGRPR. GTP-binding positions include R301, 327 to 329, and 399 to 401; these read KAD and SYG.

This sequence belongs to the adenylosuccinate synthetase family. In terms of assembly, homodimer. Requires Mg(2+) as cofactor.

The protein localises to the cytoplasm. The enzyme catalyses IMP + L-aspartate + GTP = N(6)-(1,2-dicarboxyethyl)-AMP + GDP + phosphate + 2 H(+). It participates in purine metabolism; AMP biosynthesis via de novo pathway; AMP from IMP: step 1/2. Plays an important role in the de novo pathway of purine nucleotide biosynthesis. Catalyzes the first committed step in the biosynthesis of AMP from IMP. The protein is Adenylosuccinate synthetase of Petrotoga mobilis (strain DSM 10674 / SJ95).